The sequence spans 61 residues: Large ribosomal subunit protein bL28 (61 aa).

A disordered region spans residues 1–24 (MAKDYVTGKKTTFGNKRSHSLNPT). The span at 9-23 (KKTTFGNKRSHSLNP) shows a compositional bias: polar residues.

It belongs to the bacterial ribosomal protein bL28 family.

This chain is Large ribosomal subunit protein bL28, found in Lactobacillus acidophilus (strain ATCC 700396 / NCK56 / N2 / NCFM).